A 128-amino-acid polypeptide reads, in one-letter code: Gene 39 protein (128 aa).

The polypeptide is Gene 39 protein (39) (Mycobacterium (Mycobacteriophage D29)).